Reading from the N-terminus, the 286-residue chain is Secretory carrier-associated membrane protein 2 (286 aa).

2 stretches are compositionally biased toward basic and acidic residues: residues 1-10 (MAGRYDRNPF) and 54-63 (STKDMKKKEK). The segment at 1-63 (MAGRYDRNPF…STKDMKKKEK (63 aa)) is disordered. At 1-126 (MAGRYDRNPF…LQRMQYLAFS (126 aa)) the chain is on the cytoplasmic side. Residues 52–89 (LDSTKDMKKKEKELQAKEAELNKRESELRRREEAASRA) adopt a coiled-coil conformation. 4 helical membrane-spanning segments follow: residues 127–147 (SLLGLAACLFWNIIATTAAWI), 152–172 (VMIWLLAIIYFISGVPGAYVL), 189–209 (FGWFFLFYLIHILFCIWSAVA), and 237–257 (IFYFIGFGLFCLESLLSVVVI). The Cytoplasmic portion of the chain corresponds to 258-286 (QQVYMYFRGSGKAAEMKREAARGAMRSAF).

The protein belongs to the SCAMP family.

Its subcellular location is the cell membrane. It is found in the cytoplasmic vesicle. The protein resides in the secretory vesicle membrane. Its function is as follows. Probably involved in membrane trafficking. The polypeptide is Secretory carrier-associated membrane protein 2 (SCAMP2) (Oryza sativa subsp. japonica (Rice)).